A 320-amino-acid chain; its full sequence is Olfactory receptor 12D1 (320 aa).

At 1–23 (MLNTTSVTEFLLLGVTDIQELQP) the chain is on the extracellular side. Residue Asn-3 is glycosylated (N-linked (GlcNAc...) asparagine). A helical transmembrane segment spans residues 24 to 44 (FLFVVFLTIYFISVAGNGAIL). The Cytoplasmic portion of the chain corresponds to 45-55 (MIVISDPRLHS). A helical transmembrane segment spans residues 56 to 76 (PMYFFLGNLSCLDICYSSVTL). Residues 77–97 (PKMLQNFLSAHKAISFLGCIS) lie on the Extracellular side of the membrane. Cys-95 and Cys-177 are joined by a disulfide. A helical transmembrane segment spans residues 98-118 (QLHFFHFLGSTEAMLLAVMAF). Residues 119 to 141 (DRFVAICKPLRYTVIMNPQLCTQ) are Cytoplasmic-facing. A helical transmembrane segment spans residues 142–162 (MAITIWMIGFFHALLHSLMTS). Over 163–203 (RLNFCGSNRIYHFFCDVKPLLKLACGNTELNQWLLSTVTGT) the chain is Extracellular. The helical transmembrane segment at 204-224 (IAMGPFFLTLLSYFYIITHLF) threads the bilayer. Residues 225–238 (FKTHSFSMLRKALS) are Cytoplasmic-facing. The chain crosses the membrane as a helical span at residues 239–259 (TCASHFMVVILLYAPVLFTYI). At 260-270 (HHASGTSMDQD) the chain is on the extracellular side. The chain crosses the membrane as a helical span at residues 271 to 291 (RITAIMYTVVTPVLNPLIYTL). Over 292–320 (RNKEVKGAFNRAMKRWLWPKEILKNSSEA) the chain is Cytoplasmic.

It belongs to the G-protein coupled receptor 1 family.

The protein localises to the cell membrane. Its function is as follows. Odorant receptor. The chain is Olfactory receptor 12D1 (OR12D1) from Homo sapiens (Human).